Consider the following 309-residue polypeptide: Homoserine kinase (309 aa).

ATP is bound at residue 91 to 101 (PIGSGLGSSAC).

This sequence belongs to the GHMP kinase family. Homoserine kinase subfamily.

The protein localises to the cytoplasm. It catalyses the reaction L-homoserine + ATP = O-phospho-L-homoserine + ADP + H(+). The protein operates within amino-acid biosynthesis; L-threonine biosynthesis; L-threonine from L-aspartate: step 4/5. Catalyzes the ATP-dependent phosphorylation of L-homoserine to L-homoserine phosphate. This is Homoserine kinase from Citrobacter koseri (strain ATCC BAA-895 / CDC 4225-83 / SGSC4696).